The chain runs to 492 residues: Solute carrier family 2, facilitated glucose transporter member 1 (492 aa).

N-acetylmethionine is present on Met-1. Over 1–11 the chain is Cytoplasmic; that stretch reads MEPTSKKLTGR. A helical transmembrane segment spans residues 12–33; it reads LMLAVGGAVLGSLQFGYNTGVI. Topologically, residues 34 to 66 are extracellular; that stretch reads NAPQKVIEEFYNQTWVQRYGEPIPPATLTTLWS. Residue Asn-45 is glycosylated (N-linked (GlcNAc...) asparagine). Residues 67-87 form a helical membrane-spanning segment; it reads LSVAIFSVGGMIGSFSVGLFV. Residues 88–90 lie on the Cytoplasmic side of the membrane; the sequence is NRF. The chain crosses the membrane as a helical span at residues 91-112; the sequence is GRRNSMLMMNLLAFVSAVLMGF. Residues 113–120 lie on the Extracellular side of the membrane; the sequence is SKLGKSFE. The chain crosses the membrane as a helical span at residues 121–144; sequence MLILGRFIIGVYCGLTTGFVPMYV. Residues 145–155 lie on the Cytoplasmic side of the membrane; the sequence is GEVSPTELRGA. Residues 156-176 traverse the membrane as a helical segment; that stretch reads LGTLHQLGIVVGILIAQVFGL. Residue Gln-161 participates in D-glucose binding. The Extracellular portion of the chain corresponds to 177 to 185; that stretch reads DSIMGNQEL. A helical transmembrane segment spans residues 186–206; sequence WPLLLSVIFIPALLQCILLPF. Topologically, residues 207-271 are cytoplasmic; it reads CPESPRFLLI…LFRSAAYRQP (65 aa). Ser-226 bears the Phosphoserine mark. A helical membrane pass occupies residues 272–293; it reads ILIAVVLQLSQQLSGINAVFYY. Residues 282 to 283 and Asn-288 contribute to the D-glucose site; that span reads QQ. Residues 294-306 are Extracellular-facing; that stretch reads STSIFEKAGVQQP. The chain crosses the membrane as a helical span at residues 307-328; sequence VYATIGSGIVNTAFTVVSLFVV. Asn-317 is a binding site for D-glucose. Residues 329-334 are Cytoplasmic-facing; it reads ERAGRR. A helical membrane pass occupies residues 335-355; that stretch reads TLHLIGLAGMAGCAVLMTIAL. Residues 356 to 365 lie on the Extracellular side of the membrane; it reads ALLERLPWMS. A helical membrane pass occupies residues 366–388; that stretch reads YLSIVAIFGFVAFFEVGPGPIPW. D-glucose-binding residues include Glu-380 and Trp-388. The Cytoplasmic segment spans residues 389 to 401; that stretch reads FIVAELFSQGPRP. Residues 402 to 422 traverse the membrane as a helical segment; the sequence is AAIAVAGFSNWTSNFIVGMCF. At 423-429 the chain is on the extracellular side; the sequence is QYVEQLC. A helical membrane pass occupies residues 430 to 450; that stretch reads GPYVFIIFTVLLVLFFIFTYF. At 451 to 492 the chain is on the cytoplasmic side; sequence KVPETKGRTFDEIASGFRQGGASQSDKTPEELFHPLGADSQV. At Ser-465 the chain carries Phosphoserine. The disordered stretch occupies residues 468–492; sequence RQGGASQSDKTPEELFHPLGADSQV. Phosphothreonine is present on Thr-478. Ser-490 carries the phosphoserine modification.

This sequence belongs to the major facilitator superfamily. Sugar transporter (TC 2.A.1.1) family. Glucose transporter subfamily. Found in a complex with ADD2, DMTN and SLC2A1. Interacts (via C-terminus cytoplasmic region) with DMTN. Interacts with SNX27; the interaction is required when endocytosed to prevent degradation in lysosomes and promote recycling to the plasma membrane. Interacts with GIPC (via PDZ domain). Interacts with STOM. Interacts with SGTA (via Gln-rich region). Interacts with BSG. Interacts with SMIM43; the interaction may promote SLC2A1-mediated glucose transport to meet the energy needs of mesendoderm differentiation. Phosphorylation at Ser-226 by PKC promotes glucose uptake by increasing cell membrane localization. As to expression, detected in brain capillary (at protein level). Detected in brain capillary.

It localises to the cell membrane. The protein localises to the photoreceptor inner segment. The enzyme catalyses D-glucose(out) = D-glucose(in). Its activity is regulated as follows. The uptake of glucose is inhibited by cytochalasin B. Glucose uptake is increased in response to phorbol ester 12-O-tetradecanoylphorbol-13-acetate (TPA) treatment: TPA-induced glucose uptake requires phosphorylation at Ser-226. In terms of biological role, facilitative glucose transporter, which is responsible for constitutive or basal glucose uptake. Has a very broad substrate specificity; can transport a wide range of aldoses including both pentoses and hexoses. Most important energy carrier of the brain: present at the blood-brain barrier and assures the energy-independent, facilitative transport of glucose into the brain. In association with BSG and NXNL1, promotes retinal cone survival by increasing glucose uptake into photoreceptors. Required for mesendoderm differentiation. This is Solute carrier family 2, facilitated glucose transporter member 1 from Bos taurus (Bovine).